Here is a 301-residue protein sequence, read N- to C-terminus: Probable alpha-L-glutamate ligase 1 (301 aa).

The region spanning 104–287 (MQLMSRRGIG…VAGAIIEFVE (184 aa)) is the ATP-grasp domain. ATP-binding positions include Lys-141, 178–179 (EY), Asp-187, and 211–213 (RSN). Mg(2+)-binding residues include Asp-248, Glu-260, and Asn-262. Asp-248, Glu-260, and Asn-262 together coordinate Mn(2+).

This sequence belongs to the RimK family. Mg(2+) is required as a cofactor. It depends on Mn(2+) as a cofactor.

This Shewanella putrefaciens (strain CN-32 / ATCC BAA-453) protein is Probable alpha-L-glutamate ligase 1.